Reading from the N-terminus, the 424-residue chain is Tyrosine--tRNA ligase (424 aa).

Residue tyrosine 37 participates in L-tyrosine binding. A 'HIGH' region motif is present at residues proline 42–histidine 51. 2 residues coordinate L-tyrosine: tyrosine 175 and glutamine 179. Residues lysine 235–threonine 239 carry the 'KMSKS' region motif. ATP is bound at residue lysine 238. The S4 RNA-binding domain maps to alanine 357–glycine 414.

It belongs to the class-I aminoacyl-tRNA synthetase family. TyrS type 1 subfamily. Homodimer.

It is found in the cytoplasm. The enzyme catalyses tRNA(Tyr) + L-tyrosine + ATP = L-tyrosyl-tRNA(Tyr) + AMP + diphosphate + H(+). In terms of biological role, catalyzes the attachment of tyrosine to tRNA(Tyr) in a two-step reaction: tyrosine is first activated by ATP to form Tyr-AMP and then transferred to the acceptor end of tRNA(Tyr). The chain is Tyrosine--tRNA ligase from Salmonella enteritidis PT4 (strain P125109).